The sequence spans 256 residues: Imidazole glycerol phosphate synthase subunit HisF (256 aa).

Catalysis depends on residues Asp11 and Asp130.

It belongs to the HisA/HisF family. In terms of assembly, heterodimer of HisH and HisF.

Its subcellular location is the cytoplasm. The catalysed reaction is 5-[(5-phospho-1-deoxy-D-ribulos-1-ylimino)methylamino]-1-(5-phospho-beta-D-ribosyl)imidazole-4-carboxamide + L-glutamine = D-erythro-1-(imidazol-4-yl)glycerol 3-phosphate + 5-amino-1-(5-phospho-beta-D-ribosyl)imidazole-4-carboxamide + L-glutamate + H(+). It functions in the pathway amino-acid biosynthesis; L-histidine biosynthesis; L-histidine from 5-phospho-alpha-D-ribose 1-diphosphate: step 5/9. In terms of biological role, IGPS catalyzes the conversion of PRFAR and glutamine to IGP, AICAR and glutamate. The HisF subunit catalyzes the cyclization activity that produces IGP and AICAR from PRFAR using the ammonia provided by the HisH subunit. In Psychrobacter sp. (strain PRwf-1), this protein is Imidazole glycerol phosphate synthase subunit HisF.